A 300-amino-acid chain; its full sequence is NAD kinase (300 aa).

Asp-75 (proton acceptor) is an active-site residue. NAD(+) contacts are provided by residues 75 to 76 (DG), 149 to 150 (ND), Arg-177, Asp-179, 190 to 195 (TAYALS), Ala-214, and Gln-248.

It belongs to the NAD kinase family. A divalent metal cation serves as cofactor.

The protein localises to the cytoplasm. The enzyme catalyses NAD(+) + ATP = ADP + NADP(+) + H(+). Its function is as follows. Involved in the regulation of the intracellular balance of NAD and NADP, and is a key enzyme in the biosynthesis of NADP. Catalyzes specifically the phosphorylation on 2'-hydroxyl of the adenosine moiety of NAD to yield NADP. This chain is NAD kinase, found in Paraburkholderia phytofirmans (strain DSM 17436 / LMG 22146 / PsJN) (Burkholderia phytofirmans).